The following is a 294-amino-acid chain: Acetyl-coenzyme A carboxylase carboxyl transferase subunit beta (294 aa).

Residues 30 to 294 (IMTKCPECKK…PEVGGEADGE (265 aa)) enclose the CoA carboxyltransferase N-terminal domain. Zn(2+)-binding residues include Cys-34, Cys-37, Cys-53, and Cys-56. The C4-type zinc finger occupies 34–56 (CPECKKIMYTKELQKNLMVCNYC).

It belongs to the AccD/PCCB family. Acetyl-CoA carboxylase is a heterohexamer composed of biotin carboxyl carrier protein (AccB), biotin carboxylase (AccC) and two subunits each of ACCase subunit alpha (AccA) and ACCase subunit beta (AccD). Requires Zn(2+) as cofactor.

The protein resides in the cytoplasm. It carries out the reaction N(6)-carboxybiotinyl-L-lysyl-[protein] + acetyl-CoA = N(6)-biotinyl-L-lysyl-[protein] + malonyl-CoA. It functions in the pathway lipid metabolism; malonyl-CoA biosynthesis; malonyl-CoA from acetyl-CoA: step 1/1. In terms of biological role, component of the acetyl coenzyme A carboxylase (ACC) complex. Biotin carboxylase (BC) catalyzes the carboxylation of biotin on its carrier protein (BCCP) and then the CO(2) group is transferred by the transcarboxylase to acetyl-CoA to form malonyl-CoA. This is Acetyl-coenzyme A carboxylase carboxyl transferase subunit beta from Listeria monocytogenes serotype 4a (strain HCC23).